The chain runs to 346 residues: Glycerol-3-phosphate dehydrogenase [NAD(P)+] (346 aa).

Positions 11, 12, 32, 33, and 106 each coordinate NADPH. Positions 106, 137, and 139 each coordinate sn-glycerol 3-phosphate. Ala-141 serves as a coordination point for NADPH. The sn-glycerol 3-phosphate site is built by Lys-193, Asp-246, Ser-256, Arg-257, and Asn-258. Residue Lys-193 is the Proton acceptor of the active site. Residue Arg-257 coordinates NADPH. NADPH contacts are provided by Val-281 and Glu-283.

Belongs to the NAD-dependent glycerol-3-phosphate dehydrogenase family.

It is found in the cytoplasm. It carries out the reaction sn-glycerol 3-phosphate + NAD(+) = dihydroxyacetone phosphate + NADH + H(+). The catalysed reaction is sn-glycerol 3-phosphate + NADP(+) = dihydroxyacetone phosphate + NADPH + H(+). It participates in membrane lipid metabolism; glycerophospholipid metabolism. Functionally, catalyzes the reduction of the glycolytic intermediate dihydroxyacetone phosphate (DHAP) to sn-glycerol 3-phosphate (G3P), the key precursor for phospholipid synthesis. This chain is Glycerol-3-phosphate dehydrogenase [NAD(P)+], found in Bacillus licheniformis (strain ATCC 14580 / DSM 13 / JCM 2505 / CCUG 7422 / NBRC 12200 / NCIMB 9375 / NCTC 10341 / NRRL NRS-1264 / Gibson 46).